The following is a 228-amino-acid chain: Ribonuclease 3 (228 aa).

Residues 7–136 (LNKLKNEYNI…FNGALFLDQG (130 aa)) form the RNase III domain. Mg(2+) is bound at residue glutamate 49. Aspartate 53 is a catalytic residue. The Mg(2+) site is built by aspartate 122 and glutamate 125. Glutamate 125 is a catalytic residue. The DRBM domain occupies 162–228 (DYKTDLQELL…AAKAALQKFE (67 aa)). Positions 207 to 228 (GEGHNKKAAEQQAAKAALQKFE) are disordered. Residues 216–228 (EQQAAKAALQKFE) show a composition bias toward low complexity.

This sequence belongs to the ribonuclease III family. As to quaternary structure, homodimer. Requires Mg(2+) as cofactor.

The protein resides in the cytoplasm. The catalysed reaction is Endonucleolytic cleavage to 5'-phosphomonoester.. Functionally, digests double-stranded RNA. Involved in the processing of primary rRNA transcript to yield the immediate precursors to the large and small rRNAs (23S and 16S). Processes some mRNAs, and tRNAs when they are encoded in the rRNA operon. Processes pre-crRNA and tracrRNA of type II CRISPR loci if present in the organism. The sequence is that of Ribonuclease 3 from Lactobacillus acidophilus (strain ATCC 700396 / NCK56 / N2 / NCFM).